Consider the following 538-residue polypeptide: Non-specific phospholipase C4 (538 aa).

The disordered stretch occupies residues 91–112 (KPWDSGKPDPNPGHPNMSGFAQ).

Belongs to the bacterial phospholipase C family. In terms of tissue distribution, expressed in root tips, cotyledons, on leaf margins, stems, young anthers and funiculus.

Its subcellular location is the cell membrane. It carries out the reaction a 1,2-diacyl-sn-glycero-3-phosphocholine + H2O = phosphocholine + a 1,2-diacyl-sn-glycerol + H(+). Functionally, non-specific phospholipase C (PLC) which assumes major PLC activity during inorganic phosphate starvation. Substrate preference is phosphatidylcholine (PC), but can also hydrolyze phosphatidylethanolamine (PE) with lower efficiency. Has no activity toward phosphatidic acid (PA). Plays an important role in the supply of both inorganic phosphate and diacylglycerol from membrane-localized phospholipids during phosphate deprivation. May be required for lipid-derived signaling molecules that positively modulate abscisic acid (ABA) response and promote plant tolerance to drought and salt stresses. May be involved in brassinolide-mediated signaling in root development. The protein is Non-specific phospholipase C4 (NPC4) of Arabidopsis thaliana (Mouse-ear cress).